Here is a 174-residue protein sequence, read N- to C-terminus: MEEYSWENFLNDKLLATNQVSAAGLASEEDGVVYECVATPDENNPDFDKWSLFYKEDYDIEIEDENGSKTTKTITEGQSILTMFNEGYASDGIWLGGTKYQFINMDKGLEYEGHSFDVATCAKSKGGMHIIKVGGGHILIVLYDEEKEQDRGNSKNAALAFSKELIESTDTGAA.

Residues 4–9 (YSWENF) form a pro-rich sequence-binding region. Positions 47 to 53 (FDKWSLF) match the Plasmodium-specific profilin mini-domain motif. 2 actin-binding regions span residues 99 to 111 (KYQF…GLEY) and 151 to 155 (RGNSK).

Belongs to the profilin family. As to quaternary structure, binds actin.

It is found in the cytoplasm. The protein localises to the cytoskeleton. Functionally, essential for the invasive blood stages of the parasite. Binds to proline rich sequences in various regulatory formin-like proteins and also to membrane phospholipids. Binds to actin and affects the structure of the cytoskeleton. Weakly sequesters actin monomers. The chain is Profilin from Plasmodium berghei.